A 263-amino-acid polypeptide reads, in one-letter code: Adaptin ear-binding coat-associated protein 2 (263 aa).

Disordered regions lie at residues 166–194 and 219–263; these read KKKEGAAGNPRVRPASTGGLSLLPPPPGG and APSS…WVQF. At Ser-181 the chain carries Phosphoserine. Short sequence motifs (WXXF motif) lie at residues 240 to 243 and 260 to 263; these read WGDF and WVQF. The segment covering 246 to 263 has biased composition (low complexity); that stretch reads STGSTSSQTQPGTGWVQF.

This sequence belongs to the NECAP family. Interacts with AP1G1 and AP2A1 components of the adapter protein complexes AP-1 and AP-2. Interacts with the GAE domain proteins GGA1, GGA2 and GGA3.

Its subcellular location is the cytoplasmic vesicle. The protein localises to the clathrin-coated vesicle membrane. It localises to the cell membrane. In terms of biological role, involved in endocytosis. The polypeptide is Adaptin ear-binding coat-associated protein 2 (NECAP2) (Homo sapiens (Human)).